A 279-amino-acid polypeptide reads, in one-letter code: tRNA (guanine-N(1)-)-methyltransferase (279 aa).

S-adenosyl-L-methionine contacts are provided by residues G117 and L141–L146. A disordered region spans residues W256–P279.

Belongs to the RNA methyltransferase TrmD family. Homodimer.

The protein resides in the cytoplasm. The enzyme catalyses guanosine(37) in tRNA + S-adenosyl-L-methionine = N(1)-methylguanosine(37) in tRNA + S-adenosyl-L-homocysteine + H(+). Specifically methylates guanosine-37 in various tRNAs. This is tRNA (guanine-N(1)-)-methyltransferase from Kineococcus radiotolerans (strain ATCC BAA-149 / DSM 14245 / SRS30216).